The sequence spans 101 residues: Growth-regulated alpha protein (101 aa).

A signal peptide spans Met1–Gly28. 2 disulfide bridges follow: Cys37-Cys63 and Cys39-Cys79.

The protein belongs to the intercrine alpha (chemokine CxC) family.

It is found in the secreted. In terms of biological role, has chemotactic activity for neutrophils. The protein is Growth-regulated alpha protein (CXCL1) of Cricetulus griseus (Chinese hamster).